A 269-amino-acid polypeptide reads, in one-letter code: 3-methyl-2-oxobutanoate hydroxymethyltransferase (269 aa).

Mg(2+) contacts are provided by Asp-51 and Asp-90. Residues Asp-51–Ser-52, Asp-90, and Lys-120 contribute to the 3-methyl-2-oxobutanoate site. Position 122 (Glu-122) interacts with Mg(2+). Glu-187 (proton acceptor) is an active-site residue.

Belongs to the PanB family. Homodecamer; pentamer of dimers. Mg(2+) serves as cofactor.

The protein resides in the cytoplasm. It carries out the reaction 3-methyl-2-oxobutanoate + (6R)-5,10-methylene-5,6,7,8-tetrahydrofolate + H2O = 2-dehydropantoate + (6S)-5,6,7,8-tetrahydrofolate. It participates in cofactor biosynthesis; (R)-pantothenate biosynthesis; (R)-pantoate from 3-methyl-2-oxobutanoate: step 1/2. Its function is as follows. Catalyzes the reversible reaction in which hydroxymethyl group from 5,10-methylenetetrahydrofolate is transferred onto alpha-ketoisovalerate to form ketopantoate. The protein is 3-methyl-2-oxobutanoate hydroxymethyltransferase of Tropheryma whipplei (strain TW08/27) (Whipple's bacillus).